Reading from the N-terminus, the 667-residue chain is Protein OS-9 (667 aa).

An N-terminal signal peptide occupies residues 1 to 25; that stretch reads MAAETLLSSLLGLLLLGLLLPATLT. One can recognise an MRH domain in the interval 108–230; sequence APCLLKTKDW…TIRTPRLCPH (123 aa). Cysteine 110 and cysteine 123 are joined by a disulfide. Positions 117, 118, and 130 each coordinate a mannooligosaccharide derivative. A glycan (N-linked (GlcNAc...) asparagine) is linked at asparagine 177. Cystine bridges form between cysteine 181–cysteine 216 and cysteine 196–cysteine 228. Residues aspartate 182, arginine 188, glutamate 212, and tyrosine 218 each contribute to the a mannooligosaccharide derivative site. Disordered regions lie at residues 262–450, 506–541, and 636–667; these read QADS…SDRE, EKQS…EHRV, and ERQR…EFDF. Composition is skewed to basic and acidic residues over residues 263 to 279, 304 to 328, and 396 to 408; these read ADSK…RQDP, ENSK…KEET, and PSRE…KGDP. A compositionally biased stretch (acidic residues) spans 410 to 429; that stretch reads QQNEVEEEEDDEDEDEDEDE. Over residues 430 to 450 the composition is skewed to basic and acidic residues; it reads RQLLGEFEKELEGILLPSDRE. A compositionally biased stretch (basic residues) spans 514-523; that stretch reads KKHRKRRVVP. Residues 636 to 647 are compositionally biased toward basic and acidic residues; it reads ERQRQKELESNY.

Belongs to the OS-9 family. Component of the HRD1 complex, which comprises at least SYNV1/HRD1, DERL1/2, FAM8A1, HERPUD1/HERP, OS9, SEL1L and UBE2J1. FAM8A1 is stabilized by interaction with SYNV1, which prevents its proteasomal degradation. OS9 and UBE2J1 recruitment to the complex may be mediated by SEL1L. Through this complex, may interact with ERLEC1 and HSPA5. Interacts (via C-terminus) with CPNE6 (via second C2 domain); this interaction occurs in a calcium-dependent manner in vitro. Interacts with CREB3. Intramolecular disulfide bonds.

It is found in the endoplasmic reticulum lumen. Lectin component of the HRD1 complex, which functions in endoplasmic reticulum (ER) quality control and ER-associated degradation (ERAD). Specifically recognizes and binds improperly folded glycoproteins as well as hyperglycosylated proteins, retain them in the ER, and transfers them to the ubiquitination machinery and promote their degradation. Possible targets include TRPV4 as well as hyperglycosylated HSP90B1. This chain is Protein OS-9 (OS9), found in Bos taurus (Bovine).